The following is an 807-amino-acid chain: Glycerol-3-phosphate acyltransferase (807 aa).

The short motif at 305 to 310 is the HXXXXD motif element; the sequence is CHRSHM.

Belongs to the GPAT/DAPAT family.

It localises to the cell inner membrane. The enzyme catalyses sn-glycerol 3-phosphate + an acyl-CoA = a 1-acyl-sn-glycero-3-phosphate + CoA. The protein operates within phospholipid metabolism; CDP-diacylglycerol biosynthesis; CDP-diacylglycerol from sn-glycerol 3-phosphate: step 1/3. The polypeptide is Glycerol-3-phosphate acyltransferase (Aliivibrio salmonicida (strain LFI1238) (Vibrio salmonicida (strain LFI1238))).